We begin with the raw amino-acid sequence, 212 residues long: Large ribosomal subunit protein uL4 (212 aa).

Residues 45 to 71 (RQGNASTKTRAEVRGGGRKPWRQKGTG) form a disordered region. Basic residues predominate over residues 60–71 (GGRKPWRQKGTG).

It belongs to the universal ribosomal protein uL4 family. In terms of assembly, part of the 50S ribosomal subunit.

Its function is as follows. One of the primary rRNA binding proteins, this protein initially binds near the 5'-end of the 23S rRNA. It is important during the early stages of 50S assembly. It makes multiple contacts with different domains of the 23S rRNA in the assembled 50S subunit and ribosome. In terms of biological role, forms part of the polypeptide exit tunnel. This is Large ribosomal subunit protein uL4 from Nostoc punctiforme (strain ATCC 29133 / PCC 73102).